A 164-amino-acid polypeptide reads, in one-letter code: 2-C-methyl-D-erythritol 2,4-cyclodiphosphate synthase (164 aa).

A divalent metal cation contacts are provided by Asp9 and His11. 4-CDP-2-C-methyl-D-erythritol 2-phosphate-binding positions include Asp9–His11 and His35–Ser36. Position 43 (His43) interacts with a divalent metal cation. 4-CDP-2-C-methyl-D-erythritol 2-phosphate is bound by residues Asp57–Gly59, Phe62–Asp66, Thr133–Glu136, Phe140, and Arg143.

Belongs to the IspF family. Homotrimer. Requires a divalent metal cation as cofactor.

The catalysed reaction is 4-CDP-2-C-methyl-D-erythritol 2-phosphate = 2-C-methyl-D-erythritol 2,4-cyclic diphosphate + CMP. The protein operates within isoprenoid biosynthesis; isopentenyl diphosphate biosynthesis via DXP pathway; isopentenyl diphosphate from 1-deoxy-D-xylulose 5-phosphate: step 4/6. Functionally, involved in the biosynthesis of isopentenyl diphosphate (IPP) and dimethylallyl diphosphate (DMAPP), two major building blocks of isoprenoid compounds. Catalyzes the conversion of 4-diphosphocytidyl-2-C-methyl-D-erythritol 2-phosphate (CDP-ME2P) to 2-C-methyl-D-erythritol 2,4-cyclodiphosphate (ME-CPP) with a corresponding release of cytidine 5-monophosphate (CMP). The chain is 2-C-methyl-D-erythritol 2,4-cyclodiphosphate synthase from Syntrophotalea carbinolica (strain DSM 2380 / NBRC 103641 / GraBd1) (Pelobacter carbinolicus).